The sequence spans 123 residues: MAEIAAQLVSVERPLWVGTATSVTAQTTEGEIGVLPGHEPLLGQLVENGVVTIRTNTGEKLVAAVQGGFLSVSSEKITILADSATWASEVNVADAESRKQSAETEHDKAVAESELRAVKRMEA.

Positions 96-123 (ESRKQSAETEHDKAVAESELRAVKRMEA) are disordered.

The protein belongs to the ATPase epsilon chain family. In terms of assembly, F-type ATPases have 2 components, CF(1) - the catalytic core - and CF(0) - the membrane proton channel. CF(1) has five subunits: alpha(3), beta(3), gamma(1), delta(1), epsilon(1). CF(0) has three main subunits: a, b and c.

It localises to the cell membrane. Produces ATP from ADP in the presence of a proton gradient across the membrane. The sequence is that of ATP synthase epsilon chain from Corynebacterium jeikeium (strain K411).